Reading from the N-terminus, the 1373-residue chain is DNA-directed RNA polymerase subunit beta (1373 aa).

The protein belongs to the RNA polymerase beta chain family. The RNAP catalytic core consists of 2 alpha, 1 beta, 1 beta' and 1 omega subunit. When a sigma factor is associated with the core the holoenzyme is formed, which can initiate transcription.

It catalyses the reaction RNA(n) + a ribonucleoside 5'-triphosphate = RNA(n+1) + diphosphate. Functionally, DNA-dependent RNA polymerase catalyzes the transcription of DNA into RNA using the four ribonucleoside triphosphates as substrates. The protein is DNA-directed RNA polymerase subunit beta of Rickettsia akari (strain Hartford).